Reading from the N-terminus, the 194-residue chain is Small ribosomal subunit protein uS4c (194 aa).

Positions 1–29 (RFKKIRRLGTLPGLTSKRPRSGSDLKNPL) are disordered. The 62-residue stretch at 82-143 (MRLDNILFRL…KQRSKALIQN (62 aa)) folds into the S4 RNA-binding domain.

The protein belongs to the universal ribosomal protein uS4 family. As to quaternary structure, part of the 30S ribosomal subunit. Contacts protein S5. The interaction surface between S4 and S5 is involved in control of translational fidelity.

The protein resides in the plastid. Its subcellular location is the chloroplast. Functionally, one of the primary rRNA binding proteins, it binds directly to 16S rRNA where it nucleates assembly of the body of the 30S subunit. With S5 and S12 plays an important role in translational accuracy. This Furcraea foetida (Mauritius hemp) protein is Small ribosomal subunit protein uS4c (rps4).